Consider the following 104-residue polypeptide: L-rhamnose mutarotase (104 aa).

A substrate-binding site is contributed by Y18. H22 functions as the Proton donor in the catalytic mechanism. Residues Y41 and 76–77 (WW) contribute to the substrate site.

Belongs to the rhamnose mutarotase family. Homodimer.

Its subcellular location is the cytoplasm. The enzyme catalyses alpha-L-rhamnose = beta-L-rhamnose. Its pathway is carbohydrate metabolism; L-rhamnose metabolism. In terms of biological role, involved in the anomeric conversion of L-rhamnose. The protein is L-rhamnose mutarotase of Escherichia coli O127:H6 (strain E2348/69 / EPEC).